The primary structure comprises 500 residues: Probable cytosol aminopeptidase (500 aa).

The Mn(2+) site is built by Lys264 and Asp269. Lys276 is an active-site residue. Asp287, Asp346, and Glu348 together coordinate Mn(2+). Arg350 is an active-site residue.

It belongs to the peptidase M17 family. The cofactor is Mn(2+).

It localises to the cytoplasm. It catalyses the reaction Release of an N-terminal amino acid, Xaa-|-Yaa-, in which Xaa is preferably Leu, but may be other amino acids including Pro although not Arg or Lys, and Yaa may be Pro. Amino acid amides and methyl esters are also readily hydrolyzed, but rates on arylamides are exceedingly low.. It carries out the reaction Release of an N-terminal amino acid, preferentially leucine, but not glutamic or aspartic acids.. Its function is as follows. Presumably involved in the processing and regular turnover of intracellular proteins. Catalyzes the removal of unsubstituted N-terminal amino acids from various peptides. The chain is Probable cytosol aminopeptidase from Nitrobacter winogradskyi (strain ATCC 25391 / DSM 10237 / CIP 104748 / NCIMB 11846 / Nb-255).